We begin with the raw amino-acid sequence, 990 residues long: MYLTASSSASSSIIRAASSRSSSLFSFRSVLSPSVSSTSPSSLLARRSFGTISPAFRRWSHSFHSKPSPFRFTSQIRAVSPVLDRLQRTFSSMASEHPFKGIFTTLPKPGGGEFGKFYSLPALNDPRVDKLPYSIRILLESAIRNCDNFQVTKEDVEKIIDWEKTSPKQVEIPFKPARVLLQDFTGVPAVVDLACMRDAMNKLGSDSNKINPLVPVDLVIDHSVQVDVARSENAVQANMELEFQRNKERFAFLKWGSTAFQNMLVVPPGSGIVHQVNLEYLGRVVFNTKGLLYPDSVVGTDSHTTMIDGLGVAGWGVGGIEAEATMLGQPMSMVLPGVVGFKLAGKMRNGVTATDLVLTVTQMLRKHGVVGKFVEFYGNGMSGLSLADRATIANMSPEYGATMGFFPVDHVTLQYLKLTGRSDETVAMIEAYLRANNMFVDYNEPQQDRVYSSYLELNLDDVEPCISGPKRPHDRVTLKEMKADWHSCLDSKVGFKGFAIPKEAQEKVVNFSFDGQPAELKHGSVVIAAITSCTNTSNPSVMLGAGLVAKKACDLGLQVKPWIKTSLAPGSGVVTKYLLKSGLQEYLNEQGFNIVGYGCTTCIGNSGEINESVGAAITENDIVAAAVLSGNRNFEGRVHPLTRANYLASPPLVVAYALAGTVNIDFETEPIGKGKNGKDVFLRDIWPTTEEIAEVVQSSVLPDMFRATYESITKGNPMWNKLSVPENTLYSWDPNSTYIHEPPYFKDMTMDPPGPHNVKDAYCLLNFGDSITTDHISPAGNIQKDSPAAKFLMERGVDRKDFNSYGSRRGNDEIMARGTFANIRIVNKLMNGEVGPKTVHIPSGEKLSVFDAAMRYKSSGEDTIILAGAEYGSGSSRDWAAKGPMLQGVKAVIAKSFERIHRSNLVGMGIIPLCFKSGEDADTLGLTGHERYTIHLPTDISEIRPGQDVTVTTDNGKSFTCTVRFDTEVELAYFNHGGILPYVIRNLSKQ.

Residues 1–78 constitute a mitochondrion transit peptide; the sequence is MYLTASSSAS…PFRFTSQIRA (78 aa). At serine 91 the chain carries Phosphoserine. Residues glutamine 182 and 301-303 contribute to the substrate site; that span reads DSH. The [4Fe-4S] cluster site is built by cysteine 533, cysteine 599, and cysteine 602. Substrate contacts are provided by residues arginine 632, arginine 637, arginine 795, and 876–877; that span reads SR.

This sequence belongs to the aconitase/IPM isomerase family. Monomer. Interacts with B'GAMMA in the cytosol. The cofactor is [4Fe-4S] cluster. In terms of processing, phosphorylated at Ser-91 in the cytoplasm; this phosphorylation requires the presence of B'GAMMA. As to expression, major aconitase isoenzyme in young seedlings. Expressed in roots, leaves, stems and flowers, and, at low levels, in seeds.

It is found in the mitochondrion. It localises to the cytoplasm. It catalyses the reaction citrate = D-threo-isocitrate. It functions in the pathway carbohydrate metabolism; tricarboxylic acid cycle; isocitrate from oxaloacetate: step 2/2. In terms of biological role, catalyzes the isomerization of citrate to isocitrate via cis-aconitate. Contributes to oxidative stress tolerance. Modulates cytosolic citrate metabolism during lipid mobilization. Required during seedling growth. This chain is Aconitate hydratase 3, mitochondrial, found in Arabidopsis thaliana (Mouse-ear cress).